The chain runs to 762 residues: 5-methyltetrahydropteroyltriglutamate--homocysteine methyltransferase (762 aa).

5-methyltetrahydropteroyltri-L-glutamate is bound by residues 17 to 20 and Lys-111; that span reads REWK. Residues 435–437 and Glu-488 contribute to the L-homocysteine site; that span reads IGS. L-methionine is bound by residues 435–437 and Glu-488; that span reads IGS. 5-methyltetrahydropteroyltri-L-glutamate-binding positions include 519–520 and Trp-565; that span reads RC. Residue Asp-603 coordinates L-homocysteine. Asp-603 provides a ligand contact to L-methionine. Glu-609 lines the 5-methyltetrahydropteroyltri-L-glutamate pocket. Zn(2+) is bound by residues His-645, Cys-647, and Glu-669. Catalysis depends on His-698, which acts as the Proton donor. Residue Cys-730 coordinates Zn(2+).

It belongs to the vitamin-B12 independent methionine synthase family. Zn(2+) serves as cofactor.

It catalyses the reaction 5-methyltetrahydropteroyltri-L-glutamate + L-homocysteine = tetrahydropteroyltri-L-glutamate + L-methionine. Its pathway is amino-acid biosynthesis; L-methionine biosynthesis via de novo pathway; L-methionine from L-homocysteine (MetE route): step 1/1. Catalyzes the transfer of a methyl group from 5-methyltetrahydrofolate to homocysteine resulting in methionine formation. The sequence is that of 5-methyltetrahydropteroyltriglutamate--homocysteine methyltransferase from Bacillus cereus (strain G9842).